The sequence spans 183 residues: Calcineurin subunit B type 2 (183 aa).

A lipid anchor (N-myristoyl glycine) is attached at G2. 4 consecutive EF-hand domains span residues 25-60, 64-92, 94-129, and 135-170; these read REIK…SMNP, RIIS…FHPK, DKAD…MVGS, and QISS…SGCN. Residues D107, N109, D111, and E118 each contribute to the Ca(2+) site.

This sequence belongs to the calcineurin regulatory subunit family. Calcineurin is composed of a catalytic subunit (A) and a regulatory subunit (B).

Functionally, regulatory subunit of calcineurin, a calcium-dependent, calmodulin stimulated protein phosphatase. Confers calcium sensitivity. The polypeptide is Calcineurin subunit B type 2 (cnbB) (Dictyostelium discoideum (Social amoeba)).